Here is a 266-residue protein sequence, read N- to C-terminus: Hydroxyethylthiazole kinase (266 aa).

Met-39 is a substrate binding site. Residues Lys-115 and Thr-160 each coordinate ATP. Substrate is bound at residue Gly-187.

Belongs to the Thz kinase family. Requires Mg(2+) as cofactor.

It catalyses the reaction 5-(2-hydroxyethyl)-4-methylthiazole + ATP = 4-methyl-5-(2-phosphooxyethyl)-thiazole + ADP + H(+). It participates in cofactor biosynthesis; thiamine diphosphate biosynthesis; 4-methyl-5-(2-phosphoethyl)-thiazole from 5-(2-hydroxyethyl)-4-methylthiazole: step 1/1. Catalyzes the phosphorylation of the hydroxyl group of 4-methyl-5-beta-hydroxyethylthiazole (THZ). The protein is Hydroxyethylthiazole kinase of Staphylococcus aureus (strain MSSA476).